The primary structure comprises 262 residues: Type II restriction enzyme MspI (262 aa).

The catalysed reaction is Endonucleolytic cleavage of DNA to give specific double-stranded fragments with terminal 5'-phosphates.. Functionally, a P subtype restriction enzyme that recognizes the double-stranded sequence 5'-CCGG-3' and cleaves after C-1. The polypeptide is Type II restriction enzyme MspI (mspIR) (Moraxella sp).